A 157-amino-acid chain; its full sequence is BPTI/Kunitz domain-containing protein 3 (157 aa).

Positions 1–16 (MIRLVTLAALPVLVLC) are cleaved as a signal peptide. BPTI/Kunitz inhibitor domains follow at residues 42 to 95 (CLKY…MKSC) and 97 to 151 (CKQQ…FFTC). 5 disulfide bridges follow: Cys42–Cys95, Cys70–Cys91, Cys97–Cys151, Cys107–Cys134, and Cys126–Cys147.

Nacreous layer of shell (at protein level).

Its subcellular location is the secreted. This is BPTI/Kunitz domain-containing protein 3 from Margaritifera margaritifera (Freshwater pearl mussel).